Reading from the N-terminus, the 379-residue chain is Alcohol dehydrogenase 1 (379 aa).

C47, T49, H69, C99, C102, C105, C113, and C177 together coordinate Zn(2+). An alcohol-binding residues include T49 and H69. T49 contacts NAD(+). NAD(+)-binding positions include 202 to 207 (GLGAVG), D226, R231, T272, V295, 295 to 297 (VGV), F322, and R372.

This sequence belongs to the zinc-containing alcohol dehydrogenase family. As to quaternary structure, homodimer. The cofactor is Zn(2+).

Its subcellular location is the cytoplasm. It carries out the reaction a primary alcohol + NAD(+) = an aldehyde + NADH + H(+). It catalyses the reaction a secondary alcohol + NAD(+) = a ketone + NADH + H(+). The chain is Alcohol dehydrogenase 1 (ADH1) from Zea mays (Maize).